Reading from the N-terminus, the 127-residue chain is Riboflavin kinase (127 aa).

10-15 (GLGEGK) contributes to the CDP binding site. 2 residues coordinate Mg(2+): T39 and N41. Residues T96 and E104 each contribute to the FMN site. Residue 109–112 (IQLR) coordinates CDP.

Belongs to the archaeal riboflavin kinase family. It depends on Mg(2+) as a cofactor.

The catalysed reaction is riboflavin + CTP = CDP + FMN + H(+). Its pathway is cofactor biosynthesis; FMN biosynthesis; FMN from riboflavin (CTP route): step 1/1. Catalyzes the CTP-dependent phosphorylation of riboflavin (vitamin B2) to form flavin mononucleotide (FMN). The chain is Riboflavin kinase from Methanococcus maripaludis (strain DSM 14266 / JCM 13030 / NBRC 101832 / S2 / LL).